A 216-amino-acid polypeptide reads, in one-letter code: Redox-sensing transcriptional repressor Rex (216 aa).

Positions 20-59 form a DNA-binding region, H-T-H motif; sequence QYYRLFKSLVEENVTRTNSQLISEKIGVDAATIRRDFSLF. An NAD(+)-binding site is contributed by 94–99; sequence GVGNLG.

This sequence belongs to the transcriptional regulatory Rex family. Homodimer.

It is found in the cytoplasm. In terms of biological role, modulates transcription in response to changes in cellular NADH/NAD(+) redox state. The protein is Redox-sensing transcriptional repressor Rex of Lactococcus lactis subsp. lactis (strain IL1403) (Streptococcus lactis).